Reading from the N-terminus, the 311-residue chain is Ribonuclease HIII (311 aa).

In terms of domain architecture, RNase H type-2 spans 95–311 (MSIVGSDEVG…NTEKAFRLLK (217 aa)). Positions 101, 102, and 206 each coordinate a divalent metal cation.

Belongs to the RNase HII family. RnhC subfamily. It depends on Mn(2+) as a cofactor. Requires Mg(2+) as cofactor.

The protein localises to the cytoplasm. The catalysed reaction is Endonucleolytic cleavage to 5'-phosphomonoester.. Functionally, endonuclease that specifically degrades the RNA of RNA-DNA hybrids. The sequence is that of Ribonuclease HIII from Bacillus cereus (strain ATCC 10987 / NRS 248).